Consider the following 341-residue polypeptide: RNA 3'-terminal phosphate cyclase (341 aa).

ATP-binding positions include Q102 and 283 to 287 (HLADQ). H308 functions as the Tele-AMP-histidine intermediate in the catalytic mechanism.

This sequence belongs to the RNA 3'-terminal cyclase family. Type 1 subfamily.

It localises to the cytoplasm. It catalyses the reaction a 3'-end 3'-phospho-ribonucleotide-RNA + ATP = a 3'-end 2',3'-cyclophospho-ribonucleotide-RNA + AMP + diphosphate. In terms of biological role, catalyzes the conversion of 3'-phosphate to a 2',3'-cyclic phosphodiester at the end of RNA. The mechanism of action of the enzyme occurs in 3 steps: (A) adenylation of the enzyme by ATP; (B) transfer of adenylate to an RNA-N3'P to produce RNA-N3'PP5'A; (C) and attack of the adjacent 2'-hydroxyl on the 3'-phosphorus in the diester linkage to produce the cyclic end product. The biological role of this enzyme is unknown but it is likely to function in some aspects of cellular RNA processing. This is RNA 3'-terminal phosphate cyclase from Ectopseudomonas mendocina (strain ymp) (Pseudomonas mendocina).